The sequence spans 324 residues: Beta-ketoacyl-[acyl-carrier-protein] synthase III (324 aa).

Catalysis depends on residues Cys112 and His251. Residues 252-256 are ACP-binding; the sequence is QANLR. Residue Asn281 is part of the active site.

This sequence belongs to the thiolase-like superfamily. FabH family. As to quaternary structure, homodimer.

It is found in the cytoplasm. The catalysed reaction is malonyl-[ACP] + acetyl-CoA + H(+) = 3-oxobutanoyl-[ACP] + CO2 + CoA. It participates in lipid metabolism; fatty acid biosynthesis. Catalyzes the condensation reaction of fatty acid synthesis by the addition to an acyl acceptor of two carbons from malonyl-ACP. Catalyzes the first condensation reaction which initiates fatty acid synthesis and may therefore play a role in governing the total rate of fatty acid production. Possesses both acetoacetyl-ACP synthase and acetyl transacylase activities. Its substrate specificity determines the biosynthesis of branched-chain and/or straight-chain of fatty acids. This is Beta-ketoacyl-[acyl-carrier-protein] synthase III from Clostridium perfringens (strain 13 / Type A).